The sequence spans 376 residues: Ribonucleoside-diphosphate reductase 1 subunit beta (376 aa).

The Fe cation site is built by D85, E116, and H119. Y123 is an active-site residue. Positions 205, 239, and 242 each coordinate Fe cation.

It belongs to the ribonucleoside diphosphate reductase small chain family. Tetramer of two alpha (R1) and two beta (R2) subunits. The B1 protein is a dimer of alpha subunits. A radical transfer pathway occurs between Tyr-123 of R2 and R1. Requires Fe cation as cofactor.

It catalyses the reaction a 2'-deoxyribonucleoside 5'-diphosphate + [thioredoxin]-disulfide + H2O = a ribonucleoside 5'-diphosphate + [thioredoxin]-dithiol. In terms of biological role, provides the precursors necessary for DNA synthesis. Catalyzes the biosynthesis of deoxyribonucleotides from the corresponding ribonucleotides. R2 contains the tyrosyl radical required for catalysis. The protein is Ribonucleoside-diphosphate reductase 1 subunit beta (nrdB) of Escherichia coli O157:H7.